The chain runs to 718 residues: F-box/LRR-repeat protein 18 (718 aa).

Residues 25–72 (GVHLLGFSDEILLHILSHVPSTDLILNVRRTCRKLAALCLDKSLIHTV) form the F-box domain. 12 LRR repeats span residues 77–103 (DYQA…SMAG), 104–128 (CYWL…NLSG), 129–153 (CHLT…AIDV), 177–201 (KQTL…LLYF), 324–352 (CTLS…NLSG), 367–392 (EDDI…NLSA), 393–422 (AHHH…SLPV), 468–492 (CPQP…ELIG), 516–540 (AQSV…TLAQ), 542–567 (PSVL…SLAN), 572–597 (GKVV…RLEQ), and 599–623 (YFSA…CLVS).

In terms of assembly, directly interacts with SKP1 and CUL1.

In terms of biological role, substrate-recognition component of the SCF (SKP1-CUL1-F-box protein)-type E3 ubiquitin ligase complex. This chain is F-box/LRR-repeat protein 18 (FBXL18), found in Homo sapiens (Human).